The sequence spans 397 residues: Elongation factor Tu (397 aa).

One can recognise a tr-type G domain in the interval 10–207 (KPHCNIGTIG…AVDEWIPQPE (198 aa)). Residues 19–26 (GHVDHGKT) form a G1 region. 19-26 (GHVDHGKT) provides a ligand contact to GTP. Threonine 26 contacts Mg(2+). The tract at residues 61 to 65 (GITIS) is G2. The interval 82–85 (DCPG) is G3. GTP-binding positions include 82 to 86 (DCPGH) and 137 to 140 (NKVD). Residues 137–140 (NKVD) form a G4 region. Positions 175–177 (SAL) are G5.

Belongs to the TRAFAC class translation factor GTPase superfamily. Classic translation factor GTPase family. EF-Tu/EF-1A subfamily. Monomer.

It is found in the cytoplasm. It catalyses the reaction GTP + H2O = GDP + phosphate + H(+). Functionally, GTP hydrolase that promotes the GTP-dependent binding of aminoacyl-tRNA to the A-site of ribosomes during protein biosynthesis. The polypeptide is Elongation factor Tu (Sphingopyxis alaskensis (strain DSM 13593 / LMG 18877 / RB2256) (Sphingomonas alaskensis)).